A 618-amino-acid chain; its full sequence is MFDLEYQLKNLPDKPGVYLMKNNLGEIIYVGKAKILKNRVRQYFQKSQKHSEKVKAMVKNIEEFEYIITDSEIEALILECNLIKKYRPKYNILLKDDKHYPFIKVTLAEDFPRVVSTRKVTKDGSKYFGPYVDGSSVKDIIELIKKTFPIRTCKKNIVEGAKAIRPCLNYQIGLCKAPCAQYIKKSEYREIIDDVIKLLSGKHLDIVENFKLNMERAAENLEFEKAAMLRDKINIIEKIGEKQKIILNNFDNEDYISLYSDGKDTCFQVFFLRNGKIVGREHFIIEDTFDTNSSTLISNFLKEFYGGTAYIPKTIYVPNIEDEALLEQWLTLKKESKSTIKIPIKGEKKNILVLVEKNAKTTLENFKLKYLQEKALYDNVLKDLKNILRLQEEPIRIEAFDISNIQGFDSVGSMVVFEKGRAKPSDYRRFKINTVKGADDYKSMKEILTRRFQHGLSEIKSIQDRKLEFSSGKFSVFPDLILMDGGKGQINIALEVLNTFNIDIPVCGMVKDNKHRTRGLIYNGEEIIINKYGSVMKFITRVQDEVHRFAISYHRSLRGKNSFHSLLDDIPNIGEKRKKDLLFNFKSIDNIKKATYEELLSIPSMDKKSAECVLEFFK.

The GIY-YIG domain maps to 13–92 (DKPGVYLMKN…IKKYRPKYNI (80 aa)). Residues 204–239 (LDIVENFKLNMERAAENLEFEKAAMLRDKINIIEKI) form the UVR domain.

The protein belongs to the UvrC family. In terms of assembly, interacts with UvrB in an incision complex.

It is found in the cytoplasm. The UvrABC repair system catalyzes the recognition and processing of DNA lesions. UvrC both incises the 5' and 3' sides of the lesion. The N-terminal half is responsible for the 3' incision and the C-terminal half is responsible for the 5' incision. This is UvrABC system protein C from Clostridium botulinum (strain Langeland / NCTC 10281 / Type F).